The sequence spans 349 residues: GDP-mannose:glycolipid 4-beta-D-mannosyltransferase (349 aa).

The signal sequence occupies residues 1–14 (MSASASLPVTRAAA).

This sequence belongs to the glycosyltransferase 94 family.

It localises to the cell inner membrane. It carries out the reaction beta-D-GlcA-(1-&gt;2)-alpha-D-Man-(1-&gt;3)-beta-D-Glc-(1-&gt;4)-alpha-D-Glc-di-trans,octa-cis-undecaprenyl diphosphate + GDP-alpha-D-mannose = beta-D-Man-(1-&gt;4)-beta-D-GlcA-(1-&gt;2)-alpha-D-Man-(1-&gt;3)-beta-D-Glc-(1-&gt;4)-alpha-D-Glc-di-trans,octa-cis-undecaprenyl diphosphate + GDP + H(+). Its pathway is glycan biosynthesis; xanthan biosynthesis. Its function is as follows. Nonprocessive beta-mannosyltransferase that catalyzes the transfer of a mannose residue from GDP-mannose to glucuronic acid-beta-1,2-mannose-alpha-1,3-glucose-beta-1,4-glucose-PP-polyisoprenyl to form the lipid-linked pentasaccharide repeating unit of xanthan, Man-GlcA-Man-Glc(2)-PP-Pol. Is involved in the biosynthesis of the exopolysaccharide xanthan. To a lesser extent, can also use ADP-Man and even GDP-Glc as sugar donor substrates in vitro. Is unable to transfer a Man residue to the free-tetrasaccharide GlcA-Man-Glc(2) used as an acceptor, which indicates that the diphosphate group and the lipid moiety in the acceptor substrate are of major importance for acceptor binding and catalysis. This is GDP-mannose:glycolipid 4-beta-D-mannosyltransferase (gumI) from Xanthomonas campestris pv. campestris.